A 156-amino-acid polypeptide reads, in one-letter code: Small ribosomal subunit protein uS7 (156 aa).

This sequence belongs to the universal ribosomal protein uS7 family. Part of the 30S ribosomal subunit. Contacts proteins S9 and S11.

In terms of biological role, one of the primary rRNA binding proteins, it binds directly to 16S rRNA where it nucleates assembly of the head domain of the 30S subunit. Is located at the subunit interface close to the decoding center, probably blocks exit of the E-site tRNA. This chain is Small ribosomal subunit protein uS7, found in Klebsiella pneumoniae (strain 342).